Reading from the N-terminus, the 357-residue chain is Homoserine O-acetyltransferase (357 aa).

Residues 51-340 (NVIVICHALT…EPYGHDAFLI (290 aa)) form the AB hydrolase-1 domain. The active-site Nucleophile is serine 147. Arginine 216 serves as a coordination point for substrate. Residues aspartate 306 and histidine 335 contribute to the active site. Aspartate 336 is a substrate binding site.

It belongs to the AB hydrolase superfamily. MetX family. In terms of assembly, homodimer.

It is found in the cytoplasm. The enzyme catalyses L-homoserine + acetyl-CoA = O-acetyl-L-homoserine + CoA. The protein operates within amino-acid biosynthesis; L-methionine biosynthesis via de novo pathway; O-acetyl-L-homoserine from L-homoserine: step 1/1. Functionally, transfers an acetyl group from acetyl-CoA to L-homoserine, forming acetyl-L-homoserine. This is Homoserine O-acetyltransferase from Chlorobium chlorochromatii (strain CaD3).